The primary structure comprises 123 residues: Seripauperin-16 (123 aa).

Positions 1–20 (MVKLTSIAAGVAAIAAGVAA) are cleaved as a signal peptide.

Belongs to the SRP1/TIP1 family. Seripauperin subfamily.

This is Seripauperin-16 (PAU16) from Saccharomyces cerevisiae (strain ATCC 204508 / S288c) (Baker's yeast).